A 192-amino-acid chain; its full sequence is Large ribosomal subunit protein bL9 (192 aa).

Residues alanine 173–alanine 192 are disordered. A compositionally biased stretch (acidic residues) spans phenylalanine 179–alanine 192.

The protein belongs to the bacterial ribosomal protein bL9 family.

Functionally, binds to the 23S rRNA. The polypeptide is Large ribosomal subunit protein bL9 (rplI) (Rhizobium leguminosarum bv. trifolii).